Reading from the N-terminus, the 44-residue chain is Photosystem I reaction center subunit IX (44 aa).

The helical transmembrane segment at 7–27 (YLSVAPVLSTLSLGFLTGFLI) threads the bilayer.

The protein belongs to the PsaJ family.

It is found in the plastid membrane. May help in the organization of the PsaE and PsaF subunits. The polypeptide is Photosystem I reaction center subunit IX (Cuscuta gronovii (Common dodder)).